The following is a 252-amino-acid chain: 2-succinyl-6-hydroxy-2,4-cyclohexadiene-1-carboxylate synthase (252 aa).

Belongs to the AB hydrolase superfamily. MenH family. In terms of assembly, monomer.

It catalyses the reaction 5-enolpyruvoyl-6-hydroxy-2-succinyl-cyclohex-3-ene-1-carboxylate = (1R,6R)-6-hydroxy-2-succinyl-cyclohexa-2,4-diene-1-carboxylate + pyruvate. It participates in quinol/quinone metabolism; 1,4-dihydroxy-2-naphthoate biosynthesis; 1,4-dihydroxy-2-naphthoate from chorismate: step 3/7. It functions in the pathway quinol/quinone metabolism; menaquinone biosynthesis. Catalyzes a proton abstraction reaction that results in 2,5-elimination of pyruvate from 2-succinyl-5-enolpyruvyl-6-hydroxy-3-cyclohexene-1-carboxylate (SEPHCHC) and the formation of 2-succinyl-6-hydroxy-2,4-cyclohexadiene-1-carboxylate (SHCHC). This is 2-succinyl-6-hydroxy-2,4-cyclohexadiene-1-carboxylate synthase from Shigella sonnei (strain Ss046).